Here is a 291-residue protein sequence, read N- to C-terminus: Nucleotide-binding protein lin2617 (291 aa).

13–20 (GMSGAGKT) contacts ATP. 63–66 (DLRG) provides a ligand contact to GTP.

The protein belongs to the RapZ-like family.

In terms of biological role, displays ATPase and GTPase activities. The protein is Nucleotide-binding protein lin2617 of Listeria innocua serovar 6a (strain ATCC BAA-680 / CLIP 11262).